The sequence spans 245 residues: 1-(5-phosphoribosyl)-5-[(5-phosphoribosylamino)methylideneamino] imidazole-4-carboxamide isomerase (245 aa).

Residue aspartate 13 is the Proton acceptor of the active site. The active-site Proton donor is the aspartate 132.

The protein belongs to the HisA/HisF family.

The protein resides in the cytoplasm. The enzyme catalyses 1-(5-phospho-beta-D-ribosyl)-5-[(5-phospho-beta-D-ribosylamino)methylideneamino]imidazole-4-carboxamide = 5-[(5-phospho-1-deoxy-D-ribulos-1-ylimino)methylamino]-1-(5-phospho-beta-D-ribosyl)imidazole-4-carboxamide. The protein operates within amino-acid biosynthesis; L-histidine biosynthesis; L-histidine from 5-phospho-alpha-D-ribose 1-diphosphate: step 4/9. This Frankia alni (strain DSM 45986 / CECT 9034 / ACN14a) protein is 1-(5-phosphoribosyl)-5-[(5-phosphoribosylamino)methylideneamino] imidazole-4-carboxamide isomerase.